We begin with the raw amino-acid sequence, 235 residues long: CMP-N,N'-diacetyllegionaminic acid synthase (235 aa).

This sequence belongs to the CMP-NeuNAc synthase family.

It catalyses the reaction N,N-diacetyllegionaminate + CTP = CMP-N,N-diacetyllegionaminate + diphosphate. Functionally, involved in biosynthesis of legionaminic acid (5,7-diamino-3,5,7,9-tetradeoxy-D-glycero-D-galacto-non-2-ulosonic acid)(Leg), a sialic acid-like derivative that is incorporated into flagellin via O-linkage to Ser/Thr. Catalyzes the conversion of N,N'-diacetyllegionaminic acid (Leg5Ac7Ac) and CTP into CMP-N,N'-diacetyllegionaminic acid (CMP-Leg5Ac7Ac). This chain is CMP-N,N'-diacetyllegionaminic acid synthase (legF), found in Campylobacter jejuni subsp. jejuni serotype O:2 (strain ATCC 700819 / NCTC 11168).